We begin with the raw amino-acid sequence, 782 residues long: Probable methionine--tRNA ligase, cytoplasmic (782 aa).

The 'HIGH' region signature appears at 231–241; that stretch reads PYVNNVPHLGN. A 'KMSKS' region motif is present at residues 551–555; sequence KFSKS.

This sequence belongs to the class-I aminoacyl-tRNA synthetase family.

It is found in the cytoplasm. The catalysed reaction is tRNA(Met) + L-methionine + ATP = L-methionyl-tRNA(Met) + AMP + diphosphate. In Schizosaccharomyces pombe (strain 972 / ATCC 24843) (Fission yeast), this protein is Probable methionine--tRNA ligase, cytoplasmic (rar1).